Reading from the N-terminus, the 187-residue chain is Elongation factor P (187 aa).

Belongs to the elongation factor P family.

It is found in the cytoplasm. Its pathway is protein biosynthesis; polypeptide chain elongation. In terms of biological role, involved in peptide bond synthesis. Stimulates efficient translation and peptide-bond synthesis on native or reconstituted 70S ribosomes in vitro. Probably functions indirectly by altering the affinity of the ribosome for aminoacyl-tRNA, thus increasing their reactivity as acceptors for peptidyl transferase. In Bifidobacterium animalis subsp. lactis (strain AD011), this protein is Elongation factor P.